Here is a 180-residue protein sequence, read N- to C-terminus: Small ribosomal subunit protein uS4 (180 aa).

Positions 103 to 165 (RRLQTIVYRK…KGSPFAKEGH (63 aa)) constitute an S4 RNA-binding domain.

It belongs to the universal ribosomal protein uS4 family. As to quaternary structure, part of the 30S ribosomal subunit. Contacts protein S5. The interaction surface between S4 and S5 is involved in control of translational fidelity.

In terms of biological role, one of the primary rRNA binding proteins, it binds directly to 16S rRNA where it nucleates assembly of the body of the 30S subunit. With S5 and S12 plays an important role in translational accuracy. The protein is Small ribosomal subunit protein uS4 of Thermococcus kodakarensis (strain ATCC BAA-918 / JCM 12380 / KOD1) (Pyrococcus kodakaraensis (strain KOD1)).